The sequence spans 334 residues: rRNA 2'-O-methyltransferase fibrillarin (334 aa).

A compositionally biased stretch (gly residues) spans 1 to 93 (MEGRGGSRGG…GGKPAAGGKP (93 aa)). Positions 1–94 (MEGRGGSRGG…GKPAAGGKPG (94 aa)) are disordered. Residues 184-185 (TT), 203-204 (EL), 228-229 (DA), and 248-251 (DVAQ) each bind S-adenosyl-L-methionine.

The protein belongs to the methyltransferase superfamily. Fibrillarin family. In terms of assembly, component of box C/D small nucleolar ribonucleoprotein (snoRNP) particles. It is associated with the U3, U8 and U13 small nuclear RNAs. Part of the small subunit (SSU) processome, composed of more than 70 proteins and the RNA chaperone small nucleolar RNA (snoRNA) U3. By homology to other fibrillarins, some or all of the N-terminal domain arginines are modified to asymmetric dimethylarginine (DMA).

It localises to the nucleus. The protein localises to the nucleolus. The enzyme catalyses L-glutaminyl-[histone H2A] + S-adenosyl-L-methionine = N(5)-methyl-L-glutaminyl-[histone H2A] + S-adenosyl-L-homocysteine + H(+). S-adenosyl-L-methionine-dependent methyltransferase that has the ability to methylate both RNAs and proteins. Involved in pre-rRNA processing. Utilizes the methyl donor S-adenosyl-L-methionine to catalyze the site-specific 2'-hydroxyl methylation of ribose moieties in pre-ribosomal RNA. Site specificity is provided by a guide RNA that base pairs with the substrate. Methylation occurs at a characteristic distance from the sequence involved in base pairing with the guide RNA. Also acts as a protein methyltransferase by mediating methylation of 'Gln-105' of histone H2A (H2AQ105me), a modification that impairs binding of the FACT complex and is specifically present at 35S ribosomal DNA locus. Part of the small subunit (SSU) processome, first precursor of the small eukaryotic ribosomal subunit. During the assembly of the SSU processome in the nucleolus, many ribosome biogenesis factors, an RNA chaperone and ribosomal proteins associate with the nascent pre-rRNA and work in concert to generate RNA folding, modifications, rearrangements and cleavage as well as targeted degradation of pre-ribosomal RNA by the RNA exosome. This chain is rRNA 2'-O-methyltransferase fibrillarin (fbl), found in Dictyostelium discoideum (Social amoeba).